The sequence spans 161 residues: Long arms of the bivalent protein 1 (161 aa).

A PP1 binding motif motif is present at residues 72-75; sequence KVIW. A disordered region spans residues 85 to 161; sequence GTMFEDFKED…SDKTMCSGQS (77 aa). Residues 97–115 show a composition bias toward polar residues; that stretch reads QESVSSISNNEANWGSSVN. Residues 120–129 are compositionally biased toward basic and acidic residues; that stretch reads NYEKMQKEET. Residues 130–151 show a composition bias toward acidic residues; sequence FDPYDSDSDTSEDSDFDEDFED.

Interacts with gsp-1 and gsp-2; the interaction is direct.

It localises to the chromosome. Its subcellular location is the nucleus. In terms of biological role, involved in sister chromatid cohesion during mitosis and meiosis. In association with the gsp-2 phosphatase, it both restricts the localization and antagonizes the function of the air-2 kinase during meiosis I and mitosis to promote chromatid cohesion and spindle attachment. This in turn, drives germ cell immortality. Furthermore, may play a role in ensuring the timely assembly of the synaptonemal complex during prophase I of meiosis. The chain is Long arms of the bivalent protein 1 from Caenorhabditis elegans.